A 223-amino-acid chain; its full sequence is Killer cell lectin-like receptor subfamily B member 1B allele B (223 aa).

The Cytoplasmic portion of the chain corresponds to 1 to 43 (MDSTTLVYADLNLARIQEPKHDSPPSLSPDTCRCPRWHRLALK). Positions 6-11 (LVYADL) match the ITIM motif motif. The LCK-binding motif motif lies at 32 to 35 (CRCP). Residues 44–64 (FGCAGLILLVLVVIGLCVLVL) form a helical; Signal-anchor for type II membrane protein membrane-spanning segment. At 65 to 223 (SVQKSSVQKI…LNHETPCNDS (159 aa)) the chain is on the extracellular side. Residues 101-211 (HRDKCFHVSQ…CSSDNRWICQ (111 aa)) form the C-type lectin domain. Disulfide bonds link Cys-122–Cys-210 and Cys-189–Cys-202.

In terms of assembly, homodimer; disulfide-linked. Interacts with tyrosine kinase LCK. Binds PTPN6/SHP-1 in a phosphorylation-dependent manner. Expressed in NK cells and a subset of T-cells.

It localises to the membrane. Functionally, receptor for CLEC2D/OCIL. Ligand-binding contributes to inhibition of cytotoxic natural killer (NK) cells. May mediate MHC class I-independent 'missing-self' recognition of allografts, tumor cells and virus-infected cells. This is Killer cell lectin-like receptor subfamily B member 1B allele B (Klrb1b) from Mus musculus (Mouse).